Reading from the N-terminus, the 162-residue chain is 3-isopropylmalate dehydratase small subunit (162 aa).

Belongs to the LeuD family. LeuD type 2 subfamily. As to quaternary structure, heterodimer of LeuC and LeuD.

It catalyses the reaction (2R,3S)-3-isopropylmalate = (2S)-2-isopropylmalate. The protein operates within amino-acid biosynthesis; L-leucine biosynthesis; L-leucine from 3-methyl-2-oxobutanoate: step 2/4. Its function is as follows. Catalyzes the isomerization between 2-isopropylmalate and 3-isopropylmalate, via the formation of 2-isopropylmaleate. This Pyrobaculum neutrophilum (strain DSM 2338 / JCM 9278 / NBRC 100436 / V24Sta) (Thermoproteus neutrophilus) protein is 3-isopropylmalate dehydratase small subunit.